The sequence spans 165 residues: UPF0254 protein MmarC5_0742 (165 aa).

It belongs to the UPF0254 family.

In Methanococcus maripaludis (strain C5 / ATCC BAA-1333), this protein is UPF0254 protein MmarC5_0742.